A 185-amino-acid polypeptide reads, in one-letter code: Orotate phosphoribosyltransferase (185 aa).

5-phospho-alpha-D-ribose 1-diphosphate-binding positions include arginine 94, lysine 95, lysine 98, histidine 100, and 120–128 (EDVTTTGGS). Positions 124 and 152 each coordinate orotate.

This sequence belongs to the purine/pyrimidine phosphoribosyltransferase family. PyrE subfamily. In terms of assembly, homodimer. Mg(2+) is required as a cofactor.

It carries out the reaction orotidine 5'-phosphate + diphosphate = orotate + 5-phospho-alpha-D-ribose 1-diphosphate. Its pathway is pyrimidine metabolism; UMP biosynthesis via de novo pathway; UMP from orotate: step 1/2. Its function is as follows. Catalyzes the transfer of a ribosyl phosphate group from 5-phosphoribose 1-diphosphate to orotate, leading to the formation of orotidine monophosphate (OMP). This Thermococcus kodakarensis (strain ATCC BAA-918 / JCM 12380 / KOD1) (Pyrococcus kodakaraensis (strain KOD1)) protein is Orotate phosphoribosyltransferase.